We begin with the raw amino-acid sequence, 383 residues long: LIM/homeobox protein Lhx3 (383 aa).

2 LIM zinc-binding domains span residues 14-73 (PLCA…RFGT) and 73-136 (TKCA…AKQR). Position 48 is a phosphothreonine (T48). S56 is modified (phosphoserine). Residues 142 to 201 (AKRPRTTITAKQLETLKSAYNTSPKPARHVREQLSSETGLDMRVVQVWFQNRRAKEKRLK) constitute a DNA-binding region (homeobox). Positions 197-383 (EKRLKKDAGR…WLDEVDHAQF (187 aa)) are disordered. Y212 bears the Phosphotyrosine mark. S223 carries the phosphoserine modification. Positions 307–334 (PAALQSLPGPQPLLSSLVYPEAGLGLVP) are enriched in low complexity. Residues 335–344 (AGPPGGPPPM) are compositionally biased toward pro residues.

In terms of assembly, interacts with POU1F1. At neuronal promoters, interacts with LDB1, in motor neurons LDB1 is displaced by ISL1 and a ternary complex is formed in which ISL1 contacts both LHX3 and LDB1; allosteric structural changes in the DNA binding domain of LHX3, induced by the ISL1-LHX3 interaction, may explain differences in sequence specificity of the different complexes. Interacts with LDB2. May interact with CITED2/MRG1.

The protein resides in the nucleus. In terms of biological role, transcription factor. Recognizes and binds to the consensus sequence motif 5'-AATTAATTA-3' in the regulatory elements of target genes, such as glycoprotein hormones alpha chain CGA and visual system homeobox CHX10, positively modulating transcription; transcription can be co-activated by LDB2. Synergistically enhances transcription from the prolactin promoter in cooperation with POU1F1/Pit-1. Required for the establishment of the specialized cells of the pituitary gland and the nervous system. Involved in the development of interneurons and motor neurons in cooperation with LDB1 and ISL1. The protein is LIM/homeobox protein Lhx3 (LHX3) of Sus scrofa (Pig).